A 1274-amino-acid polypeptide reads, in one-letter code: Mediator of RNA polymerase II transcription subunit 14 (1274 aa).

Disordered regions lie at residues 1-40 (MENG…KAHA), 1056-1142 (LVGT…LHTQ), and 1155-1274 (AQRQ…VVID). The segment covering 27–37 (AKREGSPDKGK) has biased composition (basic and acidic residues). Residues 1075–1085 (QDLQQGPQKTP) are compositionally biased toward polar residues. The segment covering 1090–1104 (AAQAAQAAQAAQAAQ) has biased composition (low complexity). A compositionally biased stretch (pro residues) spans 1108 to 1119 (PQRPKQQPPTPS). 3 stretches are compositionally biased toward low complexity: residues 1120 to 1142 (QPQQ…LHTQ), 1155 to 1172 (AQRQ…NNNT), and 1183 to 1252 (PQQR…PQGQ). Residues 1253–1265 (PGHGGGANGGMGG) are compositionally biased toward gly residues.

Belongs to the Mediator complex subunit 14 family. In terms of assembly, component of the Mediator complex.

The protein resides in the nucleus. Functionally, component of the Mediator complex, a coactivator involved in the regulated transcription of nearly all RNA polymerase II-dependent genes. Mediator functions as a bridge to convey information from gene-specific regulatory proteins to the basal RNA polymerase II transcription machinery. Mediator is recruited to promoters by direct interactions with regulatory proteins and serves as a scaffold for the assembly of a functional preinitiation complex with RNA polymerase II and the general transcription factors. The sequence is that of Mediator of RNA polymerase II transcription subunit 14 (rgr1) from Neurospora crassa (strain ATCC 24698 / 74-OR23-1A / CBS 708.71 / DSM 1257 / FGSC 987).